A 642-amino-acid chain; its full sequence is Uromodulin (642 aa).

The signal sequence occupies residues M1–S24. N25 and N38 each carry an N-linked (GlcNAc...) asparagine glycan. In terms of domain architecture, EGF-like 1 spans E28–E64. Intrachain disulfides connect C32/C41, C35/C50, C52/C63, C69/C82, C77/C91, C93/C105, C111/C125, C119/C134, C136/C147, C149/C160, C154/C171, C175/C268, C196/C283, C218/C256, C224/C288, C249/C257, C298/C307, C301/C316, C318/C348, C336/C426, and C367/C390. The 42-residue stretch at D65–T106 folds into the EGF-like 2; calcium-binding domain. 2 N-linked (GlcNAc...) asparagine glycosylation sites follow: N76 and N79. One can recognise an EGF-like 3; calcium-binding domain in the interval D107–E148. The beta hairpin stretch occupies residues C149–Q172. A D10C region spans residues D173–S292. An N-linked (GlcNAc...) asparagine glycan is attached at N233. N276 is a glycosylation site (N-linked (GlcNAc...) asparagine). Positions S293–I324 constitute an EGF-like 4 domain. N323 carries an N-linked (GlcNAc...) asparagine glycan. Positions E335–L430 are ZP-N. Residues E335–S590 form the ZP domain. N397 and N448 each carry an N-linked (GlcNAc...) asparagine glycan. A flexible ZP-N/ZP-C linker; important for secretion and polymerization into filaments region spans residues D431–T454. An internal hydrophobic patch (IHP) region spans residues G455–Q465. A ZP-C region spans residues G455 to S590. 3 cysteine pairs are disulfide-bonded: C507/C567, C528/C583, and C572/C579. N-linked (GlcNAc...) asparagine glycosylation is present at N514. The segment at R587–S590 is essential for cleavage by HPN. Residues V599–R607 form an external hydrophobic patch (EHP); regulates polymerization into filaments region. A618 carries the GPI-anchor amidated alanine lipid modification. A propeptide spans S619 to Q642 (removed in mature form).

Homodimer that then polymerizes into long filaments. The filaments can additionally assemble laterally to form a sheet. The filaments consist of a zigzag-shaped backbone with laterally protruding arms which interact with bacterial adhesin fimH. Two fimH molecules can bind to a single UMOD monomer. Post-translationally, N-glycosylated. Proteolytically cleaved at a conserved C-terminal proteolytic cleavage site to generate the secreted form found in urine. This cleavage is catalyzed by HPN. Detected in urine (secreted form). Detected in kidney thick ascending limb epithelial cells (at protein level).

The protein resides in the secreted. The protein localises to the apical cell membrane. It is found in the basolateral cell membrane. It localises to the cell projection. Its subcellular location is the cilium membrane. Functions in biogenesis and organization of the apical membrane of epithelial cells of the thick ascending limb of Henle's loop (TALH), where it promotes formation of complex filamentous gel-like structure that may play a role in the water barrier permeability. May serve as a receptor for binding and endocytosis of cytokines (IL-1, IL-2) and TNF. Facilitates neutrophil migration across renal epithelia. In terms of biological role, in the urine, may contribute to colloid osmotic pressure, retards passage of positively charged electrolytes and inhibits formation of liquid containing supersaturated salts and subsequent formation of salt crystals. Protects against urinary tract infections by binding to type 1 fimbriated E.coli. Binds to the bacterial adhesin fimH which mediates the stable formation of bacterial aggregates, prevents the binding of E.coli to uroplakins UPK1A and UPK1B which act as urothelial receptors for type I fimbriae, and allows for pathogen clearance through micturation. Also promotes aggregation of other bacteria including K.pneumoniae, P.aeruginosa and S.mitis and so may also protect against other uropathogens. This Mus musculus (Mouse) protein is Uromodulin (Umod).